Here is a 171-residue protein sequence, read N- to C-terminus: Small ribosomal subunit protein uS5 (171 aa).

One can recognise an S5 DRBM domain in the interval leucine 16–valine 79.

The protein belongs to the universal ribosomal protein uS5 family. Part of the 30S ribosomal subunit. Contacts proteins S4 and S8.

Its function is as follows. With S4 and S12 plays an important role in translational accuracy. Functionally, located at the back of the 30S subunit body where it stabilizes the conformation of the head with respect to the body. The polypeptide is Small ribosomal subunit protein uS5 (Psychrobacter arcticus (strain DSM 17307 / VKM B-2377 / 273-4)).